The primary structure comprises 299 residues: GTPase Era (299 aa).

The region spanning 4 to 171 (KSGFVAILGR…VDILSENLEE (168 aa)) is the Era-type G domain. A G1 region spans residues 12–19 (GRPNVGKS). 12–19 (GRPNVGKS) provides a ligand contact to GTP. The segment at 38–42 (QTTRN) is G2. The interval 59-62 (DTPG) is G3. Residues 59 to 63 (DTPGI) and 121 to 124 (NKID) contribute to the GTP site. The G4 stretch occupies residues 121-124 (NKID). A G5 region spans residues 150–152 (ISA). Residues 202 to 280 (TREEIPHSVA…FLETWVKVKK (79 aa)) form the KH type-2 domain.

It belongs to the TRAFAC class TrmE-Era-EngA-EngB-Septin-like GTPase superfamily. Era GTPase family. Monomer.

Its subcellular location is the cytoplasm. The protein localises to the cell membrane. An essential GTPase that binds both GDP and GTP, with rapid nucleotide exchange. Plays a role in 16S rRNA processing and 30S ribosomal subunit biogenesis and possibly also in cell cycle regulation and energy metabolism. The chain is GTPase Era from Streptococcus gordonii (strain Challis / ATCC 35105 / BCRC 15272 / CH1 / DL1 / V288).